The sequence spans 547 residues: Malolactic enzyme (547 aa).

Tyr92 serves as the catalytic Proton donor. The active-site Proton acceptor is the Lys165. Lys165 provides a ligand contact to substrate. Residues Glu236, Asp237, and Asp260 each contribute to the Mn(2+) site. NAD(+) contacts are provided by residues 293-296 (AGTA), Asn405, and Asn450. Asn450 contributes to the substrate binding site.

Belongs to the malic enzymes family. As to quaternary structure, homodimer. Requires Mn(2+) as cofactor. It depends on NAD(+) as a cofactor.

It catalyses the reaction (S)-malate + H(+) = (S)-lactate + CO2. Involved in the malolactic fermentation (MLF) of wine, which results in a natural decrease in acidity and favorable changes in wine flavors. Catalyzes the decarboxylation of L-malate to L-lactate. In Lactiplantibacillus plantarum (strain ATCC BAA-793 / NCIMB 8826 / WCFS1) (Lactobacillus plantarum), this protein is Malolactic enzyme.